We begin with the raw amino-acid sequence, 135 residues long: MQFERADRVAEEIKKEISDIIQHELKDPRICAELISIVKVNMSKDLRHAKVFVSIFDKNRENITSTMKALENAKPYIRREISRRINLRFSPEISFELDDSIEYGARISQILNQLNIAKDEEEEKSQDESEGEQEN.

It belongs to the RbfA family. As to quaternary structure, monomer. Binds 30S ribosomal subunits, but not 50S ribosomal subunits or 70S ribosomes.

The protein localises to the cytoplasm. Its function is as follows. One of several proteins that assist in the late maturation steps of the functional core of the 30S ribosomal subunit. Associates with free 30S ribosomal subunits (but not with 30S subunits that are part of 70S ribosomes or polysomes). Required for efficient processing of 16S rRNA. May interact with the 5'-terminal helix region of 16S rRNA. The polypeptide is Ribosome-binding factor A (Caldicellulosiruptor saccharolyticus (strain ATCC 43494 / DSM 8903 / Tp8T 6331)).